We begin with the raw amino-acid sequence, 238 residues long: Membrane protein 2 (238 aa).

It belongs to the varicellovirus ORF2 protein family. In terms of processing, phosphorylated by host.

The protein localises to the host membrane. The protein is Membrane protein 2 of Varicella-zoster virus (strain Dumas) (HHV-3).